Reading from the N-terminus, the 148-residue chain is 3-dehydroquinate dehydratase (148 aa).

Residue Tyr-26 is the Proton acceptor of the active site. Substrate is bound by residues Asn-77, His-83, and Asp-90. Residue His-103 is the Proton donor of the active site. Residues 104 to 105 and Arg-114 each bind substrate; that span reads LS.

The protein belongs to the type-II 3-dehydroquinase family. As to quaternary structure, homododecamer.

It catalyses the reaction 3-dehydroquinate = 3-dehydroshikimate + H2O. The protein operates within metabolic intermediate biosynthesis; chorismate biosynthesis; chorismate from D-erythrose 4-phosphate and phosphoenolpyruvate: step 3/7. In terms of biological role, catalyzes a trans-dehydration via an enolate intermediate. In Chlorobaculum tepidum (strain ATCC 49652 / DSM 12025 / NBRC 103806 / TLS) (Chlorobium tepidum), this protein is 3-dehydroquinate dehydratase.